Consider the following 125-residue polypeptide: Small ribosomal subunit protein bS6 (125 aa).

The interval 97 to 125 (TEASPMKAAKEERKPLAEVENNDFEDAEE) is disordered. A compositionally biased stretch (basic and acidic residues) spans 104–113 (AAKEERKPLA). Positions 116–125 (ENNDFEDAEE) are enriched in acidic residues.

It belongs to the bacterial ribosomal protein bS6 family.

Binds together with bS18 to 16S ribosomal RNA. This is Small ribosomal subunit protein bS6 from Haemophilus influenzae (strain PittEE).